The following is a 585-amino-acid chain: Protein DENND6B (585 aa).

Positions 1–10 (MEVPVGPGPR) are enriched in low complexity. The interval 1 to 25 (MEVPVGPGPRQAGGGLGATRSSSSG) is disordered. The uDENN domain occupies 43–221 (ECVCVVTFDL…IQVRIPSRVD (179 aa)). Residues 246 to 373 (VHELDLFRCF…VKLKKPSRLK (128 aa)) enclose the cDENN domain. The dDENN domain occupies 375-499 (LDTKPGLYTS…KSPHFDGWYR (125 aa)).

Belongs to the DENND6 family.

It localises to the recycling endosome. Its subcellular location is the cytoplasm. Functionally, guanine nucleotide exchange factor (GEF) for RAB14. Also has some, lesser GEF activity towards RAB35. This is Protein DENND6B (Dennd6b) from Mus musculus (Mouse).